We begin with the raw amino-acid sequence, 133 residues long: Protein U17 (133 aa).

A helical transmembrane segment spans residues 82–102; the sequence is FVSVLWCVILVFVVKIKLFFL.

The protein localises to the membrane. This is Protein U17 (U17/U16) from Homo sapiens (Human).